A 55-amino-acid polypeptide reads, in one-letter code: Large ribosomal subunit protein bL33 (55 aa).

This sequence belongs to the bacterial ribosomal protein bL33 family.

This is Large ribosomal subunit protein bL33 from Brucella abortus (strain S19).